Reading from the N-terminus, the 461-residue chain is Acetylcholine receptor subunit alpha (461 aa).

The first 24 residues, 1–24 (MILCSYWHVGLVLLLFSCCGLVLG), serve as a signal peptide directing secretion. Topologically, residues 25 to 234 (SEHETRLVAN…ITYHFIMQRI (210 aa)) are extracellular. 2 disulfide bridges follow: Cys152–Cys166 and Cys216–Cys217. N-linked (GlcNAc...) asparagine glycosylation is present at Asn165. 3 helical membrane-spanning segments follow: residues 235-259 (PLYFVVNVIIPCLLFSFLTGLVFYL), 267-285 (MTLSISVLLSLTVFLLVIV), and 301-320 (YMLFTMIFVISSIIITVVVI). The Cytoplasmic portion of the chain corresponds to 321–432 (NTHHRSPSTH…WKYVAMVIDH (112 aa)). The helical transmembrane segment at 433–451 (ILLCVFMLICIIGTVSVFA) threads the bilayer.

The protein belongs to the ligand-gated ion channel (TC 1.A.9) family. Acetylcholine receptor (TC 1.A.9.1) subfamily. Alpha-1/CHRNA1 sub-subfamily. As to quaternary structure, pentamer of two alpha chains, and one each of the beta, delta, and gamma chains.

The protein localises to the postsynaptic cell membrane. It is found in the cell membrane. The enzyme catalyses K(+)(in) = K(+)(out). It carries out the reaction Na(+)(in) = Na(+)(out). Upon acetylcholine binding, the AChR responds by an extensive change in conformation that affects all subunits and leads to opening of an ion-conducting channel across the plasma membrane. In Tetronarce californica (Pacific electric ray), this protein is Acetylcholine receptor subunit alpha (CHRNA1).